Here is a 387-residue protein sequence, read N- to C-terminus: Early growth response protein 3 (387 aa).

Residues 241-283 (PGFGSLPQPPLTLKPIRPRKYPNRPSKTPLHERPHACPAEGCD) are disordered. The segment covering 269–283 (PLHERPHACPAEGCD) has biased composition (basic and acidic residues). 3 consecutive C2H2-type zinc fingers follow at residues 275–299 (HACP…LRIH), 305–327 (FQCR…IRTH), and 333–355 (FACE…AKIH). Residues 348–387 (RKRHAKIHLKQKEKKSEKGGAPSASSAPTVSLAPVVTTCA) are disordered. The segment covering 350-360 (RHAKIHLKQKE) has biased composition (basic residues).

It belongs to the EGR C2H2-type zinc-finger protein family.

It localises to the nucleus. Probable transcription factor involved in muscle spindle development. The sequence is that of Early growth response protein 3 (Egr3) from Mus musculus (Mouse).